Here is a 365-residue protein sequence, read N- to C-terminus: WAT1-related protein At4g01440 (365 aa).

The next 10 membrane-spanning stretches (helical) occupy residues 8-28 (WTPV…NALV), 40-60 (VIAT…AFFW), 72-92 (ILVQ…YFFL), 101-121 (TLAC…ALIF), 132-152 (AGMG…LLTM), 181-201 (WIIG…WMLI), 213-233 (YSST…LSLI), 249-269 (IVTI…GTSW), 277-297 (IFTS…DFLI), and 302-322 (IFLG…IFLL). EamA domains lie at 25–144 (NALV…LICI) and 196–321 (GSWM…YIFL).

Belongs to the drug/metabolite transporter (DMT) superfamily. Plant drug/metabolite exporter (P-DME) (TC 2.A.7.4) family.

It is found in the membrane. The sequence is that of WAT1-related protein At4g01440 from Arabidopsis thaliana (Mouse-ear cress).